Consider the following 435-residue polypeptide: 3-phosphoshikimate 1-carboxyvinyltransferase (435 aa).

Residues Lys23, Ser24, and Arg28 each contribute to the 3-phosphoshikimate site. Lys23 contacts phosphoenolpyruvate. Phosphoenolpyruvate is bound by residues Gly97 and Arg125. Positions 170, 171, 172, 198, 314, 338, and 342 each coordinate 3-phosphoshikimate. Gln172 contacts phosphoenolpyruvate. The active-site Proton acceptor is the Asp314. Phosphoenolpyruvate contacts are provided by Arg346, Arg388, and Lys413.

Belongs to the EPSP synthase family. In terms of assembly, monomer.

The protein localises to the cytoplasm. It catalyses the reaction 3-phosphoshikimate + phosphoenolpyruvate = 5-O-(1-carboxyvinyl)-3-phosphoshikimate + phosphate. Its pathway is metabolic intermediate biosynthesis; chorismate biosynthesis; chorismate from D-erythrose 4-phosphate and phosphoenolpyruvate: step 6/7. Its function is as follows. Catalyzes the transfer of the enolpyruvyl moiety of phosphoenolpyruvate (PEP) to the 5-hydroxyl of shikimate-3-phosphate (S3P) to produce enolpyruvyl shikimate-3-phosphate and inorganic phosphate. In Sodalis glossinidius (strain morsitans), this protein is 3-phosphoshikimate 1-carboxyvinyltransferase.